Reading from the N-terminus, the 22-residue chain is thr operon leader peptide (22 aa).

The protein belongs to the thr operon leader peptide family.

This protein is involved in control of the biosynthesis of threonine. The polypeptide is thr operon leader peptide (Yersinia pestis bv. Antiqua (strain Antiqua)).